A 677-amino-acid polypeptide reads, in one-letter code: mRNA export factor Gle1 (677 aa).

Over residues 34 to 48 the composition is skewed to basic and acidic residues; it reads EDREPIWVEGSRKTP. Disordered stretches follow at residues 34–65, 113–136, and 294–366; these read EDRE…NNEI, KQDA…DQLQ, and ERQR…ATST. Over residues 49–60 the composition is skewed to pro residues; the sequence is EPPLPEESPAPE. Coiled-coil stretches lie at residues 122–179 and 280–346; these read ETQQ…QKLH and QQQL…AANV. Basic and acidic residues predominate over residues 294–340; it reads ERQRQQQQEEERQKLEEQQKLEEQEKLRKEKEESAAKEKQQEAETAK.

Belongs to the GLE1 family. In terms of assembly, may associate with the NPC.

The protein localises to the cytoplasm. Its subcellular location is the nucleus. It localises to the nuclear pore complex. In terms of biological role, required for the export of mRNAs containing poly(A) tails from the nucleus into the cytoplasm. May be involved in the terminal step of the mRNA transport through the nuclear pore complex (NPC). This Drosophila melanogaster (Fruit fly) protein is mRNA export factor Gle1.